A 193-amino-acid chain; its full sequence is MNFLAHLHLAHLADSSLSGNLLADFVRGNPTQAYPTDVVDGIFMHRRIDVLTDNLPEVKEAKEWFRPETRRVAPITLDVMWDHFLSRHWAQLSPEMPLPEFVRYAHSQVAMILPDSPPRFVNLNEYLWSERWLERYREMDFIQRVLNGMASRRPRLDALRDSWQDLDTHYDALESRFWQFYPRMMVQAKNKQL.

The protein belongs to the AcpH family.

The catalysed reaction is holo-[ACP] + H2O = apo-[ACP] + (R)-4'-phosphopantetheine + H(+). Its function is as follows. Converts holo-ACP to apo-ACP by hydrolytic cleavage of the phosphopantetheine prosthetic group from ACP. This is Acyl carrier protein phosphodiesterase from Enterobacter sp. (strain 638).